The chain runs to 446 residues: Trigger factor (446 aa).

In terms of domain architecture, PPIase FKBP-type spans 163–248 (GDRLVIDFEG…VKEIKKKNLL (86 aa)).

This sequence belongs to the FKBP-type PPIase family. Tig subfamily.

The protein localises to the cytoplasm. The catalysed reaction is [protein]-peptidylproline (omega=180) = [protein]-peptidylproline (omega=0). Involved in protein export. Acts as a chaperone by maintaining the newly synthesized protein in an open conformation. Functions as a peptidyl-prolyl cis-trans isomerase. This is Trigger factor from Natranaerobius thermophilus (strain ATCC BAA-1301 / DSM 18059 / JW/NM-WN-LF).